Consider the following 61-residue polypeptide: Beta-insect depressant toxin BotIT5 (61 aa).

An LCN-type CS-alpha/beta domain is found at 1–61 (DGYIRKRDGC…TWKSETNTCG (61 aa)). Cystine bridges form between C10–C60, C14–C35, C21–C42, and C25–C44. At G61 the chain carries Glycine amide.

The protein belongs to the long (4 C-C) scorpion toxin superfamily. Sodium channel inhibitor family. Beta subfamily. Expressed by the venom gland.

It is found in the secreted. Its function is as follows. Depressant insect beta-toxins cause a transient contraction paralysis followed by a slow flaccid paralysis. They bind voltage-independently at site-4 of sodium channels (Nav) and shift the voltage of activation toward more negative potentials thereby affecting sodium channel activation and promoting spontaneous and repetitive firing. This toxin is active only on insects. This is Beta-insect depressant toxin BotIT5 from Buthus occitanus tunetanus (Common European scorpion).